The sequence spans 595 residues: Apolipoprotein N-acyltransferase 2 (595 aa).

Helical transmembrane passes span 30-50 (FLAF…FGFF), 63-83 (LFFH…HWII), 95-115 (VVAI…FPIF), 167-187 (AEIT…YTLF), and 210-230 (FITL…FLFK). Residues 241–555 (LNVLIVQPDA…AEALSETIDV (315 aa)) enclose the CN hydrolase domain. Glu293 (proton acceptor) is an active-site residue. Residue Lys372 is part of the active site. The Nucleophile role is filled by Cys463. A helical transmembrane segment spans residues 569 to 589 (LIPWLMLFLTGIYYLNLLIGI).

It belongs to the CN hydrolase family. Apolipoprotein N-acyltransferase subfamily.

It is found in the cell inner membrane. The enzyme catalyses N-terminal S-1,2-diacyl-sn-glyceryl-L-cysteinyl-[lipoprotein] + a glycerophospholipid = N-acyl-S-1,2-diacyl-sn-glyceryl-L-cysteinyl-[lipoprotein] + a 2-acyl-sn-glycero-3-phospholipid + H(+). It functions in the pathway protein modification; lipoprotein biosynthesis (N-acyl transfer). Catalyzes the phospholipid dependent N-acylation of the N-terminal cysteine of apolipoprotein, the last step in lipoprotein maturation. This chain is Apolipoprotein N-acyltransferase 2, found in Leptospira interrogans serogroup Icterohaemorrhagiae serovar copenhageni (strain Fiocruz L1-130).